Consider the following 465-residue polypeptide: Siroheme synthase (465 aa).

Residues 1-203 (MDFLPLFHSL…GRPAEAERLL (203 aa)) are precorrin-2 dehydrogenase /sirohydrochlorin ferrochelatase. Residues 22–23 (EV) and 43–44 (PQ) each bind NAD(+). Serine 128 carries the phosphoserine modification. A uroporphyrinogen-III C-methyltransferase region spans residues 217–465 (GEVYLVGAGP…AWFEGAREDA (249 aa)). Proline 226 serves as a coordination point for S-adenosyl-L-methionine. Aspartate 249 acts as the Proton acceptor in catalysis. Catalysis depends on lysine 271, which acts as the Proton donor. S-adenosyl-L-methionine-binding positions include 302 to 304 (GGD), isoleucine 307, 332 to 333 (TA), methionine 384, and glycine 413.

This sequence in the N-terminal section; belongs to the precorrin-2 dehydrogenase / sirohydrochlorin ferrochelatase family. It in the C-terminal section; belongs to the precorrin methyltransferase family.

The enzyme catalyses uroporphyrinogen III + 2 S-adenosyl-L-methionine = precorrin-2 + 2 S-adenosyl-L-homocysteine + H(+). It catalyses the reaction precorrin-2 + NAD(+) = sirohydrochlorin + NADH + 2 H(+). The catalysed reaction is siroheme + 2 H(+) = sirohydrochlorin + Fe(2+). It participates in cofactor biosynthesis; adenosylcobalamin biosynthesis; precorrin-2 from uroporphyrinogen III: step 1/1. The protein operates within cofactor biosynthesis; adenosylcobalamin biosynthesis; sirohydrochlorin from precorrin-2: step 1/1. Its pathway is porphyrin-containing compound metabolism; siroheme biosynthesis; precorrin-2 from uroporphyrinogen III: step 1/1. It functions in the pathway porphyrin-containing compound metabolism; siroheme biosynthesis; siroheme from sirohydrochlorin: step 1/1. It participates in porphyrin-containing compound metabolism; siroheme biosynthesis; sirohydrochlorin from precorrin-2: step 1/1. Its function is as follows. Multifunctional enzyme that catalyzes the SAM-dependent methylations of uroporphyrinogen III at position C-2 and C-7 to form precorrin-2 via precorrin-1. Then it catalyzes the NAD-dependent ring dehydrogenation of precorrin-2 to yield sirohydrochlorin. Finally, it catalyzes the ferrochelation of sirohydrochlorin to yield siroheme. The sequence is that of Siroheme synthase from Pseudomonas aeruginosa (strain ATCC 15692 / DSM 22644 / CIP 104116 / JCM 14847 / LMG 12228 / 1C / PRS 101 / PAO1).